The primary structure comprises 958 residues: Coiled-coil domain-containing protein 33 (958 aa).

The C2 domain maps to 214–353; that stretch reads SPEEPLIASQ…LVKPTESGKA (140 aa). Positions 602–617 are enriched in polar residues; it reads SKDTVSSTMDLSTSTP. The tract at residues 602–628 is disordered; that stretch reads SKDTVSSTMDLSTSTPREAEEEPLVPE. Coiled coils occupy residues 632–774 and 859–899; these read DTEM…LEDR and FNLL…RLQE. Residues 899 to 958 form a disordered region; the sequence is EQEKGFRHPSNSIIIEQPSALTHSMDLKQPSELEPLLPSSDSKLNKPLSPQKETANSQQT. Polar residues-rich tracts occupy residues 907-920 and 949-958; these read PSNS…SALT and QKETANSQQT.

This chain is Coiled-coil domain-containing protein 33 (CCDC33), found in Homo sapiens (Human).